A 359-amino-acid polypeptide reads, in one-letter code: Histidinol-phosphate aminotransferase (359 aa).

The residue at position 217 (K217) is an N6-(pyridoxal phosphate)lysine.

Belongs to the class-II pyridoxal-phosphate-dependent aminotransferase family. Histidinol-phosphate aminotransferase subfamily. As to quaternary structure, homodimer. Pyridoxal 5'-phosphate is required as a cofactor.

The catalysed reaction is L-histidinol phosphate + 2-oxoglutarate = 3-(imidazol-4-yl)-2-oxopropyl phosphate + L-glutamate. It functions in the pathway amino-acid biosynthesis; L-histidine biosynthesis; L-histidine from 5-phospho-alpha-D-ribose 1-diphosphate: step 7/9. This is Histidinol-phosphate aminotransferase from Salmonella typhi.